Consider the following 310-residue polypeptide: Cysteine synthase (310 aa).

N6-(pyridoxal phosphate)lysine is present on K44. Pyridoxal 5'-phosphate contacts are provided by residues N74, 179–183, and S267; that span reads GTGGT.

Belongs to the cysteine synthase/cystathionine beta-synthase family. It depends on pyridoxal 5'-phosphate as a cofactor.

The enzyme catalyses O-acetyl-L-serine + hydrogen sulfide = L-cysteine + acetate. It functions in the pathway amino-acid biosynthesis; L-cysteine biosynthesis; L-cysteine from L-serine: step 2/2. This Neisseria meningitidis serogroup B (strain ATCC BAA-335 / MC58) protein is Cysteine synthase (cysK).